Consider the following 199-residue polypeptide: Ciliary neurotrophic factor (199 aa).

It belongs to the CNTF family. In terms of tissue distribution, nervous system.

The protein localises to the cytoplasm. CNTF is a survival factor for various neuronal cell types. Seems to prevent the degeneration of motor axons after axotomy. The chain is Ciliary neurotrophic factor (CNTF) from Oryctolagus cuniculus (Rabbit).